Here is a 197-residue protein sequence, read N- to C-terminus: Recombination protein RecR (197 aa).

The C4-type zinc-finger motif lies at 54-69 (CQQCNNYTEQTLCTLC). The region spanning 77–172 (TLLCVVESPA…NISQLAHGIP (96 aa)) is the Toprim domain.

This sequence belongs to the RecR family.

In terms of biological role, may play a role in DNA repair. It seems to be involved in an RecBC-independent recombinational process of DNA repair. It may act with RecF and RecO. This is Recombination protein RecR from Legionella pneumophila (strain Paris).